Consider the following 239-residue polypeptide: Probable transcriptional regulatory protein Ajs_1898 (239 aa).

The disordered stretch occupies residues 1 to 21 (MAGHSKWANIQHRKGRQDEKR).

It belongs to the TACO1 family.

It localises to the cytoplasm. The chain is Probable transcriptional regulatory protein Ajs_1898 from Acidovorax sp. (strain JS42).